The chain runs to 330 residues: Glycerol-3-phosphate dehydrogenase [NAD(P)+] (330 aa).

Positions 10, 11, 31, and 105 each coordinate NADPH. The sn-glycerol 3-phosphate site is built by K105, G135, and S137. Residue A139 coordinates NADPH. Residues K190, D243, S253, R254, and N255 each coordinate sn-glycerol 3-phosphate. The active-site Proton acceptor is the K190. Residue R254 participates in NADPH binding. The NADPH site is built by V278 and E280.

It belongs to the NAD-dependent glycerol-3-phosphate dehydrogenase family.

It localises to the cytoplasm. It carries out the reaction sn-glycerol 3-phosphate + NAD(+) = dihydroxyacetone phosphate + NADH + H(+). The enzyme catalyses sn-glycerol 3-phosphate + NADP(+) = dihydroxyacetone phosphate + NADPH + H(+). It participates in membrane lipid metabolism; glycerophospholipid metabolism. In terms of biological role, catalyzes the reduction of the glycolytic intermediate dihydroxyacetone phosphate (DHAP) to sn-glycerol 3-phosphate (G3P), the key precursor for phospholipid synthesis. In Nitratidesulfovibrio vulgaris (strain ATCC 29579 / DSM 644 / CCUG 34227 / NCIMB 8303 / VKM B-1760 / Hildenborough) (Desulfovibrio vulgaris), this protein is Glycerol-3-phosphate dehydrogenase [NAD(P)+].